Reading from the N-terminus, the 377-residue chain is Homoserine O-acetyltransferase (377 aa).

Positions 48–347 constitute an AB hydrolase-1 domain; sequence NVVLIEHALT…PVGHDAFLTE (300 aa). The Nucleophile role is filled by Ser-143. Arg-213 serves as a coordination point for substrate. Catalysis depends on residues Asp-311 and His-341. Residue Asp-342 coordinates substrate.

This sequence belongs to the AB hydrolase superfamily. MetX family. Homodimer.

The protein resides in the cytoplasm. The enzyme catalyses L-homoserine + acetyl-CoA = O-acetyl-L-homoserine + CoA. Its pathway is amino-acid biosynthesis; L-methionine biosynthesis via de novo pathway; O-acetyl-L-homoserine from L-homoserine: step 1/1. Transfers an acetyl group from acetyl-CoA to L-homoserine, forming acetyl-L-homoserine. This Corynebacterium glutamicum (strain ATCC 13032 / DSM 20300 / JCM 1318 / BCRC 11384 / CCUG 27702 / LMG 3730 / NBRC 12168 / NCIMB 10025 / NRRL B-2784 / 534) protein is Homoserine O-acetyltransferase.